The chain runs to 130 residues: uncharacterized protein (130 aa).

Helical transmembrane passes span 35 to 57 (FLIT…FISL) and 72 to 91 (IVFF…LLLL).

The protein localises to the cell membrane. This is an uncharacterized protein from Pasteurella multocida (strain Pm70).